The primary structure comprises 615 residues: Afadin- and alpha-actinin-binding protein (615 aa).

Coiled coils occupy residues 126–227 (KLGS…IAMD) and 266–293 (RQKQILMENAELKKVLQQMKKEMISLLS). Phosphoserine is present on residues S290, S293, S313, and S319. The disordered stretch occupies residues 293 to 316 (SPQKKKPRERAEDGTGTVAISDIE). Residues 375-461 (ISRQDHEQET…RSFTEAAIRL (87 aa)) are a coiled coil. Phosphoserine is present on residues S537, S541, and S543. The segment at 567-615 (PEESKPSEVARESTDQKWSVQSRPSSREGCYSGCSSAFRSAHGDRDDLP) is disordered. Residues 568 to 581 (EESKPSEVARESTD) show a composition bias toward basic and acidic residues.

Belongs to the ADIP family. As to quaternary structure, interacts with SSX2 and SSX3. Does not interact with SSX1 and SSX4. Interacts with afadin and alpha-actinin. Interacts with VAV2. Interacts with PCM1. Interacts with WRAP73. As to expression, widely expressed.

It is found in the cell junction. The protein localises to the adherens junction. Its subcellular location is the nucleus. The protein resides in the cytoplasm. It localises to the cytoskeleton. It is found in the microtubule organizing center. The protein localises to the centrosome. Its subcellular location is the centriolar satellite. The protein resides in the cilium basal body. Belongs to an adhesion system, which plays a role in the organization of homotypic, interneuronal and heterotypic cell-cell adherens junctions (AJs). May connect the nectin-afadin and E-cadherin-catenin system through alpha-actinin and may be involved in organization of the actin cytoskeleton at AJs through afadin and alpha-actinin. Acts as a centrosome maturation factor, probably by maintaining the integrity of the pericentriolar material and proper microtubule nucleation at mitotic spindle poles. The function seems to implicate at least in part WRAP73; the SSX2IP:WRAP73 complex is proposed to act as regulator of spindle anchoring at the mitotic centrosome. Involved in cell movement: localizes at the leading edge of moving cells in response to PDGF and is required for the formation of the leading edge and the promotion of cell movement, possibly via activation of Rac signaling. Involved in ciliogenesis. It is required for targeted recruitment of the BBSome, CEP290, RAB8, and SSTR3 to the cilia. This is Afadin- and alpha-actinin-binding protein (Ssx2ip) from Mus musculus (Mouse).